The chain runs to 438 residues: sn-glycerol-3-phosphate-binding periplasmic protein UgpB (438 aa).

Positions 1–23 (MKPLHYTASALALGLALMGNAQA) are cleaved as a signal peptide. Positions 65, 89, 144, 270, 307, 346, and 397 each coordinate sn-glycerol 3-phosphate.

This sequence belongs to the bacterial solute-binding protein 1 family. As to quaternary structure, the complex is composed of two ATP-binding proteins (UgpC), two transmembrane proteins (UgpA and UgpE) and a solute-binding protein (UgpB).

The protein resides in the periplasm. Functionally, part of the ABC transporter complex UgpBAEC involved in sn-glycerol-3-phosphate (G3P) import. Binds G3P. The polypeptide is sn-glycerol-3-phosphate-binding periplasmic protein UgpB (ugpB) (Shigella dysenteriae serotype 1 (strain Sd197)).